Consider the following 328-residue polypeptide: Ribosomal RNA large subunit methyltransferase F (328 aa).

The segment at methionine 1–asparagine 31 is disordered.

The protein belongs to the methyltransferase superfamily. METTL16/RlmF family.

Its subcellular location is the cytoplasm. It catalyses the reaction adenosine(1618) in 23S rRNA + S-adenosyl-L-methionine = N(6)-methyladenosine(1618) in 23S rRNA + S-adenosyl-L-homocysteine + H(+). Specifically methylates the adenine in position 1618 of 23S rRNA. This is Ribosomal RNA large subunit methyltransferase F from Pseudomonas savastanoi pv. phaseolicola (strain 1448A / Race 6) (Pseudomonas syringae pv. phaseolicola (strain 1448A / Race 6)).